The following is a 127-amino-acid chain: Large ribosomal subunit protein bL12 (127 aa).

Belongs to the bacterial ribosomal protein bL12 family. As to quaternary structure, homodimer. Part of the ribosomal stalk of the 50S ribosomal subunit. Forms a multimeric L10(L12)X complex, where L10 forms an elongated spine to which 2 to 4 L12 dimers bind in a sequential fashion. Binds GTP-bound translation factors.

Functionally, forms part of the ribosomal stalk which helps the ribosome interact with GTP-bound translation factors. Is thus essential for accurate translation. In Streptomyces griseus subsp. griseus (strain JCM 4626 / CBS 651.72 / NBRC 13350 / KCC S-0626 / ISP 5235), this protein is Large ribosomal subunit protein bL12.